The following is a 172-amino-acid chain: SsrA-binding protein (172 aa).

The protein belongs to the SmpB family.

The protein resides in the cytoplasm. Functionally, required for rescue of stalled ribosomes mediated by trans-translation. Binds to transfer-messenger RNA (tmRNA), required for stable association of tmRNA with ribosomes. tmRNA and SmpB together mimic tRNA shape, replacing the anticodon stem-loop with SmpB. tmRNA is encoded by the ssrA gene; the 2 termini fold to resemble tRNA(Ala) and it encodes a 'tag peptide', a short internal open reading frame. During trans-translation Ala-aminoacylated tmRNA acts like a tRNA, entering the A-site of stalled ribosomes, displacing the stalled mRNA. The ribosome then switches to translate the ORF on the tmRNA; the nascent peptide is terminated with the 'tag peptide' encoded by the tmRNA and targeted for degradation. The ribosome is freed to recommence translation, which seems to be the essential function of trans-translation. The polypeptide is SsrA-binding protein (Dehalococcoides mccartyi (strain CBDB1)).